We begin with the raw amino-acid sequence, 184 residues long: GTPase RhebL1 (184 aa).

GTP-binding positions include 16–21 (SVGKTS), 32–38 (LEGYDPT), Gly-63, 119–122 (NKAD), and 149–150 (SA). The short motif at 35 to 43 (YDPTVENTY) is the Effector region element. Thr-38 contributes to the Mg(2+) binding site. Residue Cys-181 is modified to Cysteine methyl ester. Cys-181 is lipidated: S-farnesyl cysteine. Positions 182–184 (YLM) are cleaved as a propeptide — removed in mature form.

The protein belongs to the small GTPase superfamily. Rheb family. In terms of assembly, interacts with MTOR.

It localises to the endomembrane system. The protein localises to the cytoplasm. It catalyses the reaction GTP + H2O = GDP + phosphate + H(+). Functionally, binds GTP and exhibits intrinsic GTPase activity. May activate NF-kappa-B-mediated gene transcription. Promotes signal transduction through MTOR, activates RPS6KB1, and is a downstream target of the small GTPase-activating proteins TSC1 and TSC2. The sequence is that of GTPase RhebL1 (Rhebl1) from Mus musculus (Mouse).